Consider the following 462-residue polypeptide: MREPRHVPQLRASGRRFPQRGRRHRFGKRNDAMSWSDRLVSRFNGARDAGGGAAPRTAARAASGARAAAGGLASVVNGARPTRSRMLDFDYSLLWVSIALLGLGVVMVYSASIAMPDSPKYASYHDYAFLLRHCVSLVVAFVAAVIAFRVPVSTWDKYAPHLFLIALVGLVIVLIPHIGKGVNGARRWIPLGITNMQPSEIMKLAVTIYAANYTVRKQEYMQSFAKGFLPMAFAVGLVGALLLLEPDMGAFMVVAAIAMGVLFLGGVNGKLFGGLVATAVGTFTMLVWLSPWRRERIFAYLDPWDERYAQGKAYQLTHSLIAFGRGEWFGVGLGGSVEKLNYLPEAHTDFILAVIGEELGFVGVLVVILLFYWIVRRSFEIGRQALALDRTFAGLMAKGVGIWFGAQAFINMGVNLGLLPTKGLTLPLVSYGGSGILLNCISLAVLLRVDYENRVLMRGGKV.

The tract at residues 1–28 (MREPRHVPQLRASGRRFPQRGRRHRFGK) is disordered. Residues 1-92 (MREPRHVPQL…RSRMLDFDYS (92 aa)) are Cytoplasmic-facing. A compositionally biased stretch (basic residues) spans 13–27 (SGRRFPQRGRRHRFG). The helical transmembrane segment at 93 to 113 (LLWVSIALLGLGVVMVYSASI) threads the bilayer. The Periplasmic portion of the chain corresponds to 114–127 (AMPDSPKYASYHDY). A helical transmembrane segment spans residues 128–148 (AFLLRHCVSLVVAFVAAVIAF). Residues 149 to 158 (RVPVSTWDKY) are Cytoplasmic-facing. A helical membrane pass occupies residues 159-179 (APHLFLIALVGLVIVLIPHIG). Topologically, residues 180–192 (KGVNGARRWIPLG) are periplasmic. The helical transmembrane segment at 193–215 (ITNMQPSEIMKLAVTIYAANYTV) threads the bilayer. Topologically, residues 216-223 (RKQEYMQS) are cytoplasmic. The helical transmembrane segment at 224 to 244 (FAKGFLPMAFAVGLVGALLLL) threads the bilayer. Residues 245–247 (EPD) lie on the Periplasmic side of the membrane. The chain crosses the membrane as a helical span at residues 248–268 (MGAFMVVAAIAMGVLFLGGVN). The Cytoplasmic segment spans residues 269–270 (GK). The chain crosses the membrane as a helical span at residues 271–291 (LFGGLVATAVGTFTMLVWLSP). Residues 292–349 (WRRERIFAYLDPWDERYAQGKAYQLTHSLIAFGRGEWFGVGLGGSVEKLNYLPEAHTD) are Periplasmic-facing. The helical transmembrane segment at 350–370 (FILAVIGEELGFVGVLVVILL) threads the bilayer. Residues 371 to 398 (FYWIVRRSFEIGRQALALDRTFAGLMAK) lie on the Cytoplasmic side of the membrane. The chain crosses the membrane as a helical span at residues 399-419 (GVGIWFGAQAFINMGVNLGLL). Topologically, residues 420–425 (PTKGLT) are periplasmic. Residues 426–446 (LPLVSYGGSGILLNCISLAVL) traverse the membrane as a helical segment. Residues 447–462 (LRVDYENRVLMRGGKV) are Cytoplasmic-facing.

It belongs to the SEDS family. FtsW subfamily.

It localises to the cell inner membrane. The catalysed reaction is [GlcNAc-(1-&gt;4)-Mur2Ac(oyl-L-Ala-gamma-D-Glu-L-Lys-D-Ala-D-Ala)](n)-di-trans,octa-cis-undecaprenyl diphosphate + beta-D-GlcNAc-(1-&gt;4)-Mur2Ac(oyl-L-Ala-gamma-D-Glu-L-Lys-D-Ala-D-Ala)-di-trans,octa-cis-undecaprenyl diphosphate = [GlcNAc-(1-&gt;4)-Mur2Ac(oyl-L-Ala-gamma-D-Glu-L-Lys-D-Ala-D-Ala)](n+1)-di-trans,octa-cis-undecaprenyl diphosphate + di-trans,octa-cis-undecaprenyl diphosphate + H(+). Its pathway is cell wall biogenesis; peptidoglycan biosynthesis. Peptidoglycan polymerase that is essential for cell division. The chain is Probable peptidoglycan glycosyltransferase FtsW from Burkholderia thailandensis (strain ATCC 700388 / DSM 13276 / CCUG 48851 / CIP 106301 / E264).